The following is a 427-amino-acid chain: Trigger factor (427 aa).

Residues 163–248 (GDTVVIDFVG…IHEVKAKEVP (86 aa)) enclose the PPIase FKBP-type domain.

Belongs to the FKBP-type PPIase family. Tig subfamily.

The protein localises to the cytoplasm. The enzyme catalyses [protein]-peptidylproline (omega=180) = [protein]-peptidylproline (omega=0). Functionally, involved in protein export. Acts as a chaperone by maintaining the newly synthesized protein in an open conformation. Functions as a peptidyl-prolyl cis-trans isomerase. The protein is Trigger factor of Streptococcus pneumoniae serotype 2 (strain D39 / NCTC 7466).